The chain runs to 443 residues: F-box only protein 39 (443 aa).

The region spanning 13–59 (QSCWATLPDVCLRRVFWWLGDRDRSRAALVCRKWNQIMYSADLWRYR) is the F-box domain.

As to quaternary structure, directly interacts with SKP1 and CUL1.

Its function is as follows. Substrate-recognition component of the SCF (SKP1-CUL1-F-box protein)-type E3 ubiquitin ligase complex. This is F-box only protein 39 (Fbxo39) from Rattus norvegicus (Rat).